The chain runs to 513 residues: Zinc finger CCCH-type with G patch domain-containing protein (513 aa).

A C3H1-type zinc finger spans residues Pro-155–Leu-178. Composition is skewed to acidic residues over residues Asp-252–Ser-261 and Ser-273–Leu-283. The segment at Asp-252–Leu-283 is disordered. One can recognise a G-patch domain in the interval Thr-312–Glu-358. The span at Gln-477–Arg-495 shows a compositional bias: polar residues. The interval Gln-477 to Phe-513 is disordered. A compositionally biased stretch (basic and acidic residues) spans Ser-496–Phe-513.

The protein resides in the nucleus. Functionally, transcription repressor. The sequence is that of Zinc finger CCCH-type with G patch domain-containing protein from Drosophila simulans (Fruit fly).